Here is a 407-residue protein sequence, read N- to C-terminus: Peptidase T (407 aa).

Position 82 (histidine 82) interacts with Zn(2+). The active site involves aspartate 84. Residue aspartate 143 coordinates Zn(2+). Glutamate 177 serves as the catalytic Proton acceptor. Zn(2+) contacts are provided by glutamate 178, aspartate 200, and histidine 382.

This sequence belongs to the peptidase M20B family. It depends on Zn(2+) as a cofactor.

The protein localises to the cytoplasm. The catalysed reaction is Release of the N-terminal residue from a tripeptide.. In terms of biological role, cleaves the N-terminal amino acid of tripeptides. The polypeptide is Peptidase T (Streptococcus pyogenes serotype M3 (strain ATCC BAA-595 / MGAS315)).